A 158-amino-acid polypeptide reads, in one-letter code: MRKAKPKKRQILPDPVFGDVKVTRFVNHLMYDGKKNTAFEIFYSALETVKGKLPNEEKSALEIWKAALDNITPQVEVKSRRVGGATFQVPTEIRPDRKESISMKNLIIFARKRGGKTMADKLSAEIVDAFNNQGGAFKRKEDMHRMAEANRAFAHFRF.

Belongs to the universal ribosomal protein uS7 family. Part of the 30S ribosomal subunit. Contacts proteins S9 and S11.

Functionally, one of the primary rRNA binding proteins, it binds directly to 16S rRNA where it nucleates assembly of the head domain of the 30S subunit. Is located at the subunit interface close to the decoding center, probably blocks exit of the E-site tRNA. The polypeptide is Small ribosomal subunit protein uS7 (Parabacteroides distasonis (strain ATCC 8503 / DSM 20701 / CIP 104284 / JCM 5825 / NCTC 11152)).